We begin with the raw amino-acid sequence, 124 residues long: NADH-quinone oxidoreductase subunit A (124 aa).

The next 3 membrane-spanning stretches (helical) occupy residues 11-31, 68-88, and 93-113; these read YLPI…IMIL, LVAI…PWAI, and IGKI…IGFV.

The protein belongs to the complex I subunit 3 family. As to quaternary structure, NDH-1 is composed of 14 different subunits. Subunits NuoA, H, J, K, L, M, N constitute the membrane sector of the complex.

It is found in the cell inner membrane. It catalyses the reaction a quinone + NADH + 5 H(+)(in) = a quinol + NAD(+) + 4 H(+)(out). Its function is as follows. NDH-1 shuttles electrons from NADH, via FMN and iron-sulfur (Fe-S) centers, to quinones in the respiratory chain. The immediate electron acceptor for the enzyme in this species is believed to be ubiquinone. Couples the redox reaction to proton translocation (for every two electrons transferred, four hydrogen ions are translocated across the cytoplasmic membrane), and thus conserves the redox energy in a proton gradient. The protein is NADH-quinone oxidoreductase subunit A of Rickettsia bellii (strain RML369-C).